The sequence spans 782 residues: Cyclic nucleotide-gated channel beta-3 (782 aa).

Disordered regions lie at residues 1 to 111 (MFKS…PKSK) and 147 to 168 (GDISSPEASPQTAKPTAVPSTQ). Over 1 to 213 (MFKSLTIKSN…SIDSYTDRLY (213 aa)) the chain is Cytoplasmic. Basic and acidic residues-rich tracts occupy residues 13-25 (KPREENDENKQDP) and 57-73 (EESHAKMQDKISEKNSL). Polar residues-rich tracts occupy residues 74-83 (RDLTTNPNHQ) and 152-168 (PEASPQTAKPTAVPSTQ). The helical transmembrane segment at 214–237 (LLWLLLVTIAYNWNCWLIPLRLVF) threads the bilayer. The Extracellular segment spans residues 238–244 (PYQTPDN). The chain crosses the membrane as a helical span at residues 245–265 (THYWFITDITCDIIYLCDMLL). At 266 to 294 (IQPRLQFIKGGDIMVDSNELKRHYRSSTK) the chain is on the cytoplasmic side. A helical membrane pass occupies residues 295-312 (FQLDVASVMPFDVFYLFF). Residues 313 to 315 (GFN) are Extracellular-facing. The chain crosses the membrane as a helical span at residues 316–330 (PVFRMNRILKYTSFF). Residues 331-343 (EFNHHLESIMDKA) lie on the Cytoplasmic side of the membrane. The interval 343-442 (AYIYRVIRTT…IGQMQDVIGA (100 aa)) is ion conduction pathway. A helical transmembrane segment spans residues 344-366 (YIYRVIRTTGYLLYTLHINACIY). Residues 367–388 (YWASDYEGIGSTKWVYNGEGNK) are Extracellular-facing. 2 helical membrane passes run 389–415 (YLRCYYWAVRTLITIGGLPEPQTSFEI) and 416–440 (VFQLLNFFSGVFVFSSLIGQMQDVI). The selectivity filter stretch occupies residues 402–405 (TIGG). Topologically, residues 441–782 (GAATANQNNF…TIEVKEKAKQ (342 aa)) are cytoplasmic. A C-linker region spans residues 445 to 521 (ANQNNFRISM…SIISKVELFK (77 aa)). The interval 525-641 (TQMIYDMLLR…LLMKKASVLL (117 aa)) is cyclic nucleotide-binding domain. 3',5'-cyclic GMP contacts are provided by Gly-586, Glu-587, Arg-599, and Thr-600. Positions 692-724 (EQTIQKTSENSEEGGGKRREYEDKEREPSEKIL) are disordered. The segment covering 705-724 (GGGKRREYEDKEREPSEKIL) has biased composition (basic and acidic residues).

Belongs to the cyclic nucleotide-gated cation channel (TC 1.A.1.5) family. CNGB3 subfamily. As to quaternary structure, forms heterotetrameric channels composed of CNGA3 and CNGB3 subunits with 3:1 stoichiometry.

It is found in the cell membrane. The enzyme catalyses Ca(2+)(in) = Ca(2+)(out). It carries out the reaction Na(+)(in) = Na(+)(out). The catalysed reaction is K(+)(in) = K(+)(out). It catalyses the reaction NH4(+)(in) = NH4(+)(out). The enzyme catalyses Rb(+)(in) = Rb(+)(out). It carries out the reaction Li(+)(in) = Li(+)(out). The catalysed reaction is Cs(+)(in) = Cs(+)(out). Its function is as follows. Pore-forming subunit of the cone cyclic nucleotide-gated channel. Mediates cone photoresponses at bright light converting transient changes in intracellular cGMP levels into electrical signals. In the dark, cGMP levels are high and keep the channel open enabling a steady inward current carried by Na(+) and Ca(2+) ions that leads to membrane depolarization and neurotransmitter release from synaptic terminals. Upon photon absorption cGMP levels decline leading to channel closure and membrane hyperpolarization that ultimately slows neurotransmitter release and signals the presence of light, the end point of the phototransduction cascade. Conducts cGMP- and cAMP-gated ion currents, with permeability for monovalent and divalent cations. This is Cyclic nucleotide-gated channel beta-3 from Canis lupus familiaris (Dog).